The sequence spans 411 residues: MNAKRIRGLLILAAVIAIAVLIWRHFTQTTPAAPGTSEQHAARTSHSENSGSGGGRRAAMRTLAPVQAALTQSASVPHYLSGLGTVTAANTVTLRSRVNGQLMALHFQEGQQVKVGDLLAEIDPRPFQVELTQAQGQLAKDQAALLNTRQDLARYQQLVKTNLISRQELDTQTAAVRQAEGALKADEGAVASAQLQLDYSKITAPISGRIGLKQVDVGNYITSGDTNGIVVITQTYPIDVVFTVPEAEISTILNAQKSGQPPVVEAWDRANQKKLSQGILLSMDNQIDTTTGTIKLKARFDNLDDALFPNQFVNIRMKVDTLKNAVVAPSAAVQMGNDGRFVWILNNKNEVSKRQVTTSIQYGQLVVVTAGLDADVQVVTDGIDRLTEGAKVEIVPSALTEKTPAIAGEKS.

The signal sequence occupies residues 1–19 (MNAKRIRGLLILAAVIAIA). The segment covering 31–49 (PAAPGTSEQHAARTSHSEN) has biased composition (polar residues). The tract at residues 31–58 (PAAPGTSEQHAARTSHSENSGSGGGRRA) is disordered.

Belongs to the membrane fusion protein (MFP) (TC 8.A.1) family. In terms of assembly, part of a tripartite efflux system composed of MdtA, MdtB and MdtC.

It is found in the cell inner membrane. The polypeptide is Multidrug resistance protein MdtA (Pectobacterium atrosepticum (strain SCRI 1043 / ATCC BAA-672) (Erwinia carotovora subsp. atroseptica)).